We begin with the raw amino-acid sequence, 344 residues long: Holliday junction branch migration complex subunit RuvB (344 aa).

Residues 1-181 form a large ATPase domain (RuvB-L) region; the sequence is MERIVTPAEM…FGVLCAMEYY (181 aa). Residues Leu20, Arg21, Gly62, Lys65, Thr66, Thr67, 128-130, Arg171, Tyr181, and Arg218 each bind ATP; that span reads EDY. Mg(2+) is bound at residue Thr66. Residues 182 to 252 are small ATPAse domain (RuvB-S); the sequence is DETQLKEIVI…EARDALELLE (71 aa). The segment at 255-344 is head domain (RuvB-H); that stretch reads NQGFDKVDNK…SNKGQTSFFK (90 aa). 2 residues coordinate DNA: Arg310 and Arg315.

The protein belongs to the RuvB family. Homohexamer. Forms an RuvA(8)-RuvB(12)-Holliday junction (HJ) complex. HJ DNA is sandwiched between 2 RuvA tetramers; dsDNA enters through RuvA and exits via RuvB. An RuvB hexamer assembles on each DNA strand where it exits the tetramer. Each RuvB hexamer is contacted by two RuvA subunits (via domain III) on 2 adjacent RuvB subunits; this complex drives branch migration. In the full resolvosome a probable DNA-RuvA(4)-RuvB(12)-RuvC(2) complex forms which resolves the HJ.

The protein resides in the cytoplasm. It carries out the reaction ATP + H2O = ADP + phosphate + H(+). Functionally, the RuvA-RuvB-RuvC complex processes Holliday junction (HJ) DNA during genetic recombination and DNA repair, while the RuvA-RuvB complex plays an important role in the rescue of blocked DNA replication forks via replication fork reversal (RFR). RuvA specifically binds to HJ cruciform DNA, conferring on it an open structure. The RuvB hexamer acts as an ATP-dependent pump, pulling dsDNA into and through the RuvAB complex. RuvB forms 2 homohexamers on either side of HJ DNA bound by 1 or 2 RuvA tetramers; 4 subunits per hexamer contact DNA at a time. Coordinated motions by a converter formed by DNA-disengaged RuvB subunits stimulates ATP hydrolysis and nucleotide exchange. Immobilization of the converter enables RuvB to convert the ATP-contained energy into a lever motion, pulling 2 nucleotides of DNA out of the RuvA tetramer per ATP hydrolyzed, thus driving DNA branch migration. The RuvB motors rotate together with the DNA substrate, which together with the progressing nucleotide cycle form the mechanistic basis for DNA recombination by continuous HJ branch migration. Branch migration allows RuvC to scan DNA until it finds its consensus sequence, where it cleaves and resolves cruciform DNA. The protein is Holliday junction branch migration complex subunit RuvB of Clostridium botulinum (strain Eklund 17B / Type B).